The primary structure comprises 100 residues: MTLTKAELADLLFDQVGLNKREAKDMVESFFEEIRLALESGDSVKLSGFGNFQLRDKPQRPGRNPKTGEEIPITARRVVTFHASQKLKGMVEQYHANKQG.

A disordered region spans residues 50–70; it reads GNFQLRDKPQRPGRNPKTGEE.

Belongs to the bacterial histone-like protein family. Heterodimer of an alpha and a beta chain.

In terms of biological role, this protein is one of the two subunits of integration host factor, a specific DNA-binding protein that functions in genetic recombination as well as in transcriptional and translational control. This is Integration host factor subunit alpha from Chromobacterium violaceum (strain ATCC 12472 / DSM 30191 / JCM 1249 / CCUG 213 / NBRC 12614 / NCIMB 9131 / NCTC 9757 / MK).